Here is a 357-residue protein sequence, read N- to C-terminus: uncharacterized protein (357 aa).

S72 carries the post-translational modification Phosphoserine. Disordered regions lie at residues G79–R98, Q264–V290, and I323–K357. The span at S324–S335 shows a compositional bias: acidic residues.

This is an uncharacterized protein from Saccharomyces cerevisiae (strain ATCC 204508 / S288c) (Baker's yeast).